The following is a 354-amino-acid chain: Uroporphyrinogen decarboxylase (354 aa).

Residues 27–31, Asp77, Tyr154, Ser209, and His327 contribute to the substrate site; that span reads RQAGR.

This sequence belongs to the uroporphyrinogen decarboxylase family. In terms of assembly, homodimer.

The protein localises to the cytoplasm. It carries out the reaction uroporphyrinogen III + 4 H(+) = coproporphyrinogen III + 4 CO2. The protein operates within porphyrin-containing compound metabolism; protoporphyrin-IX biosynthesis; coproporphyrinogen-III from 5-aminolevulinate: step 4/4. In terms of biological role, catalyzes the decarboxylation of four acetate groups of uroporphyrinogen-III to yield coproporphyrinogen-III. The polypeptide is Uroporphyrinogen decarboxylase (Pseudoalteromonas translucida (strain TAC 125)).